The sequence spans 123 residues: Large ribosomal subunit protein uL14c (123 aa).

It belongs to the universal ribosomal protein uL14 family. As to quaternary structure, part of the 50S ribosomal subunit.

It is found in the plastid. The protein localises to the chloroplast. Binds to 23S rRNA. The sequence is that of Large ribosomal subunit protein uL14c from Saccharum hybrid (Sugarcane).